The sequence spans 61 residues: Metallothionein-2 (61 aa).

Met1 is modified (N-acetylmethionine). Residues 1–29 (MDPNCSCTAGESCTCAGSCKCKDCKCASC) are beta. A divalent metal cation contacts are provided by Cys5, Cys7, Cys13, Cys15, Cys19, Cys21, Cys24, Cys26, Cys29, Cys33, Cys34, Cys36, Cys37, Cys41, Cys44, Cys48, Cys50, and Cys57. The segment at 30–61 (KKSCCSCCPVGCAKCAQGCVCKGASDKCSCCA) is alpha. Ser58 is subject to Phosphoserine. Residues Cys59 and Cys60 each coordinate a divalent metal cation.

Belongs to the metallothionein superfamily. Type 1 family. As to quaternary structure, interacts with EOLA1.

Functionally, metallothioneins have a high content of cysteine residues that bind various heavy metals; these proteins are transcriptionally regulated by both heavy metals and glucocorticoids. In Ovis aries (Sheep), this protein is Metallothionein-2 (MT2A).